Here is a 304-residue protein sequence, read N- to C-terminus: N-acetylmuramic acid 6-phosphate etherase (304 aa).

Positions 62–225 constitute an SIS domain; sequence IVTAFRQGGR…TTASMILMGK (164 aa). Residue Glu-90 is the Proton donor of the active site. The active site involves Glu-121.

It belongs to the GCKR-like family. MurNAc-6-P etherase subfamily. As to quaternary structure, homodimer.

The enzyme catalyses N-acetyl-D-muramate 6-phosphate + H2O = N-acetyl-D-glucosamine 6-phosphate + (R)-lactate. The protein operates within amino-sugar metabolism; 1,6-anhydro-N-acetylmuramate degradation. Its pathway is amino-sugar metabolism; N-acetylmuramate degradation. It participates in cell wall biogenesis; peptidoglycan recycling. Functionally, specifically catalyzes the cleavage of the D-lactyl ether substituent of MurNAc 6-phosphate, producing GlcNAc 6-phosphate and D-lactate. Together with AnmK, is also required for the utilization of anhydro-N-acetylmuramic acid (anhMurNAc) either imported from the medium or derived from its own cell wall murein, and thus plays a role in cell wall recycling. This chain is N-acetylmuramic acid 6-phosphate etherase, found in Actinobacillus succinogenes (strain ATCC 55618 / DSM 22257 / CCUG 43843 / 130Z).